The following is a 2422-amino-acid chain: Non-reducing polyketide synthase trt4 (2422 aa).

The tract at residues 14–196 is N-terminal acylcarrier protein transacylase domain (SAT); that stretch reads VLFGPKCPKT…HHSDHTSVVQ (183 aa). Residues 289–314 are disordered; the sequence is VEPPDSHHNTNTTQDSDVTTNASPLT. A compositionally biased stretch (polar residues) spans 297–312; it reads NTNTTQDSDVTTNASP. A Ketosynthase family 3 (KS3) domain is found at 329–745; the sequence is TVPIAVTGMA…GSNAAIVLQE (417 aa). Residues Cys-494, His-629, and His-668 each act as for beta-ketoacyl synthase activity in the active site. Positions 856 to 1121 are malonyl-CoA:ACP transacylase (MAT) domain; the sequence is LCFGGQTGNT…CPIDLSGPQA (266 aa). Residue Ser-904 is the For acyl/malonyl transferase activity of the active site. The tract at residues 1190–1316 is N-terminal hotdog fold; it reads PSLVKLLNND…GKISISSEAN (127 aa). The PKS/mFAS DH domain occupies 1190–1495; it reads PSLVKLLNND…FTCVSIQSLK (306 aa). Residues 1191-1494 form a product template (PT) domain region; the sequence is SLVKLLNNDG…TFTCVSIQSL (304 aa). His-1221 serves as the catalytic Proton acceptor; for dehydratase activity. The C-terminal hotdog fold stretch occupies residues 1345–1495; the sequence is SSGLKRSTVY…FTCVSIQSLK (151 aa). Asp-1402 acts as the Proton donor; for dehydratase activity in catalysis. Residues 1535–1612 enclose the Carrier domain; sequence SRSEDGLRVV…GLVQRIFPGG (78 aa). Ser-1572 carries the O-(pantetheine 4'-phosphoryl)serine modification. Positions 1615–1636 are disordered; that stretch reads AHVETHSQPPDKIGITTGDRMP. Positions 1774 to 2007 are methyltransferase (CMeT) domain; that stretch reads QHASEHKLLH…GFNWVDWTDN (234 aa). Residues 2036–2383 form a thioesterase (TE) domain region; that stretch reads NAVAEETLVY…LAPHIPTDEY (348 aa). Catalysis depends on for thioesterase activity residues Ser-2159, Asp-2320, and His-2352.

It carries out the reaction 3 malonyl-CoA + acetyl-CoA + 2 S-adenosyl-L-methionine = 3,5-dimethylorsellinate + 2 S-adenosyl-L-homocysteine + 3 CO2 + 4 CoA. The protein operates within secondary metabolite biosynthesis; terpenoid biosynthesis. Its function is as follows. Non-reducing polyketide synthase; part of the gene cluster that mediates the biosynthesis of terretonin, a fungal meroterpenoid that acts as a mycotoxin. The first step of the pathway is the synthesis of 3,5-dimethylorsellinic acid (DMOA) by the polyketide synthase trt4. DMOA is then prenylated into farnesyl-DMOA by the polyprenyl transferase trt2. Methylation by the methyltransferase trt5 then leads to farnesyl-DMOA methyl ester which is further subject to epoxidation by the FAD-dependent monooxygenase trt8 to yield epoxyfarnesyl-DMOA methyl ester. Cyclization of epoxyfarnesyl-DMOA methyl ester by the terpene cyclase trt1 leads to a tetracycle intermediate which is in turn converted to preterretonin. Dehydrogenase trt9 comes next to transform preterretonin to preterrenoid. The FAD-dependent monooxygenase trt3 is then required for the C-hydroxylation at C16 of preterrenoid to yield terrenoid. The cytochrome P450 trt6 catalyzes three successive oxidations to transform terrenoid into an unstable intermediate, which then undergoes the D-ring expansion and unusual rearrangement of the methoxy group to afford the core skeleton of terretonin. Trt14 catalyzes the D-ring expansion of terretonin involving intramolecular methoxy rearrangement as well as the hydrolysis of the expanded D-ring and the methyl ester moiety. Finally, the nonheme iron-dependent dioxygenase trt7 accomplishes the last two oxidation reactions steps to complete the biosynthesis of terretonin. Terretonin C is produced via spontaneous decarboxylation of the terretonin precursor. Another shunt product of the terretonin biosynthesis is dihydrofarnesyl-DMOA, derived from epoxyfarnesyl-DMOA through hydrolysis of the epoxide. The chain is Non-reducing polyketide synthase trt4 from Aspergillus terreus (strain NIH 2624 / FGSC A1156).